Consider the following 300-residue polypeptide: Lysenin-related protein 3 (300 aa).

Positions 12 to 35 are N-terminal cap domain; the sequence is EEIEVDVVAVWKEGYVYENRGDTS. The beta-hairpin domain stretch occupies residues 36–109; the sequence is VEQKITMTKG…SQVIEHTVTI (74 aa). Residues 110–158 are N-terminal cap domain; the sequence is PPTSKFTRWKLNADVGGTDIEYMYLIDEVTPISVTQTIPQVIRSRAKIL. The segment at 159-299 is C-terminal receptor-binding domain; the sequence is VGRQIHLGTT…EDKWILEVVN (141 aa). An N-(acyl)-sphingosylphosphocholine contacts are provided by Lys187, Ser229, Tyr235, and Tyr284. A disulfide bridge connects residues Cys274 and Cys285.

Belongs to the lysenin family. As to quaternary structure, binds to sphingomyelin as a monomer by using its C-terminal domain. Forms a nonamer when sphingomyelin/LRP-3 ratio is lower than ca 500. Oligomerization, but not binding, is influenced by the fluidity of sphingomyelin. In terms of tissue distribution, expressed by coelomocytes.

It localises to the secreted. It is found in the target cell membrane. Its function is as follows. Pore-forming toxin that specifically binds sphingomyelin in the plasma membrane of various cells. Has antibacterial and hemolytic activity. The protein is Lysenin-related protein 3 of Eisenia fetida (Red wiggler worm).